A 385-amino-acid polypeptide reads, in one-letter code: MSWQQRVDDALTARRATDTLRRRYVVSQGAGRWLVANGRQYLNFSSNDYLGLSQHPQIIRAWQQAATRFGVGSGGSGHISGYSVAHQALEEELAQWLGYPRALLFISGFAANQAVITALMKKNDRIVADRLSHASLLEAANLSPAQLRRFIHNDTQHLSRLLQSPCVGQQLVVTEGVYSMDGDSAPLAEIQHIARRHHAWLLVDDAHGIGVTGDEGRGTCWQRGGKPELLVVTFGKGFGVSGAAVLCSESVADYLLQFARHLVYSTSMPPAQAQALSASLAVIRSDEGRERREKLAALVQRFRAGVNASRFTLLNAHSAIQPLIVGDNSRALRLAEALRQQGCWATAIRPPTVPVGTARLRLTLTQAHEACDIDRLLEVLHGAGE.

Substrate is bound at residue Arg21. Position 108 to 109 (108 to 109 (GF)) interacts with pyridoxal 5'-phosphate. His133 contacts substrate. Pyridoxal 5'-phosphate contacts are provided by Ser179, His207, and Thr233. Lys236 is subject to N6-(pyridoxal phosphate)lysine. Thr352 is a binding site for substrate.

The protein belongs to the class-II pyridoxal-phosphate-dependent aminotransferase family. BioF subfamily. As to quaternary structure, homodimer. Pyridoxal 5'-phosphate is required as a cofactor.

It carries out the reaction 6-carboxyhexanoyl-[ACP] + L-alanine + H(+) = (8S)-8-amino-7-oxononanoate + holo-[ACP] + CO2. It participates in cofactor biosynthesis; biotin biosynthesis. Its function is as follows. Catalyzes the decarboxylative condensation of pimeloyl-[acyl-carrier protein] and L-alanine to produce 8-amino-7-oxononanoate (AON), [acyl-carrier protein], and carbon dioxide. This Salmonella dublin (strain CT_02021853) protein is 8-amino-7-oxononanoate synthase.